A 1149-amino-acid chain; its full sequence is Golgi apparatus protein 1 homolog (1149 aa).

An N-terminal signal peptide occupies residues 1 to 19 (MWRFPLILASVCWLTTAQQ). Topologically, residues 20–1115 (QNVANDPDKK…NLVMEHPERN (1096 aa)) are extracellular. Cys-rich GLG1 repeat units lie at residues 24–69 (NDPD…FSET), 71–135 (TLSE…KNVT), 139–207 (KCHA…VKNA), 216–276 (ILGD…NDKF), 277–344 (MDPE…NQPE), 349–411 (QPSK…ESRN), 415–475 (KLGA…NVDS), 477–549 (DMVP…YDEQ), 551–610 (PLSV…ETDN), 613–676 (RKHP…DAKE), 677–736 (MNNK…FEHK), 743–803 (DLTD…IECL), 809–867 (HLGP…IVRL), 868–938 (LQRE…RQSI), 945–1009 (DFSP…NKGL), and 1010–1070 (IRDK…DKQE). N133 carries N-linked (GlcNAc...) asparagine glycosylation. The N-linked (GlcNAc...) asparagine glycan is linked to N411. Residues 1116-1136 (SILGYLAGFIVFILLIGCCCG) form a helical membrane-spanning segment. The Cytoplasmic portion of the chain corresponds to 1137–1149 (RVSKKQYIEMKNR).

The protein resides in the membrane. The sequence is that of Golgi apparatus protein 1 homolog from Caenorhabditis elegans.